The following is a 104-amino-acid chain: Replication factor A protein 3 (104 aa).

This sequence belongs to the replication factor A protein 3 family. Component of the heterotrimeric canonical replication protein A complex (RPA).

It localises to the nucleus. Functionally, as part of the replication protein A (RPA/RP-A), a single-stranded DNA-binding heterotrimeric complex, may play an essential role in DNA replication, recombination and repair. Binds and stabilizes single-stranded DNA intermediates, preventing complementary DNA reannealing and recruiting different proteins involved in DNA metabolism. The polypeptide is Replication factor A protein 3 (ssb3) (Schizosaccharomyces pombe (strain 972 / ATCC 24843) (Fission yeast)).